Reading from the N-terminus, the 640-residue chain is Threonine--tRNA ligase (640 aa).

The segment at 224–525 (DHRKLGKELD…LTEHYAGAFP (302 aa)) is catalytic. Positions 323, 374, and 502 each coordinate Zn(2+).

The protein belongs to the class-II aminoacyl-tRNA synthetase family. In terms of assembly, homodimer. Zn(2+) serves as cofactor.

It is found in the cytoplasm. It carries out the reaction tRNA(Thr) + L-threonine + ATP = L-threonyl-tRNA(Thr) + AMP + diphosphate + H(+). Its function is as follows. Catalyzes the attachment of threonine to tRNA(Thr) in a two-step reaction: L-threonine is first activated by ATP to form Thr-AMP and then transferred to the acceptor end of tRNA(Thr). Also edits incorrectly charged L-seryl-tRNA(Thr). The chain is Threonine--tRNA ligase from Tropheryma whipplei (strain TW08/27) (Whipple's bacillus).